The primary structure comprises 167 residues: uncharacterized protein (167 aa).

This is an uncharacterized protein from Pasteurella multocida (strain Pm70).